The following is a 992-amino-acid chain: Disks large-associated protein 1 (992 aa).

2 disordered regions span residues 150 to 209 (TKSH…SWWS) and 355 to 376 (KAMG…PKVA). S169 is modified (phosphoserine). A compositionally biased stretch (low complexity) spans 194–209 (RSNASNASPTSPSWWS). Phosphoserine is present on residues S362, S365, S368, S372, S389, S418, S421, S425, S428, S437, S509, S516, and S578. Phosphothreonine is present on T579. 2 positions are modified to phosphoserine: S581 and S605. Phosphothreonine is present on T606. S608 and S611 each carry phosphoserine. 2 interaction with DYL2 regions span residues 665 to 676 (LSIGIQVDDAEE) and 687 to 698 (NKFQSVGVQVEE). The interval 914 to 980 (WKQMDPLDKK…QNSATESAES (67 aa)) is disordered. Composition is skewed to basic and acidic residues over residues 918-927 (DPLDKKERRA) and 943-958 (IRER…EARK). Residue S947 is modified to Phosphoserine. The segment covering 969–978 (VRQNSATESA) has biased composition (polar residues). The PDZ-binding motif lies at 990–992 (TRL).

Belongs to the SAPAP family. In terms of assembly, interacts with the guanylate kinase-like domain of DLG1, DLG2, DLG3, DLG4 and AIP1. Interacts with the PDZ domain of SHANK1, SHANK2 and SHANK3. Found in a complex with DLG4 and SHANK1, SHANK2 or SHANK3. Found in a complex with DLG4 and BEGAIN. Interacts with DYL2 and LRFN1. Interacts with MPP2 (via the SH3-Guanylate kinase-like sub-module). Post-translationally, ubiquitinated by TRIM3; leading to proteasomal degradation. In terms of tissue distribution, highest levels in the neocortex, part of the hippocampus, the granule cell layer of the cerebellum, the glomerular layer of the olfactory bulb, the inner plexiform layer of the retina, the ventral and dorsal horn of the spinal cord, the neuromuscular junction and the submandibular ganglion.

It is found in the cell membrane. Its subcellular location is the postsynaptic density. The protein localises to the synapse. Its function is as follows. Part of the postsynaptic scaffold in neuronal cells. The chain is Disks large-associated protein 1 (Dlgap1) from Mus musculus (Mouse).